We begin with the raw amino-acid sequence, 265 residues long: Apolipoprotein A-I (265 aa).

The signal sequence occupies residues 1-18 (MKAVVLTLAVLFLTGSQA). 2 tandem repeats follow at residues 67–88 (LKLV…EHLG) and 89–110 (PVAQ…REIN). The 10 X approximate tandem repeats stretch occupies residues 67–265 (LKLVDNWDTL…IDEAAKKLTA (199 aa)). A 3; half-length repeat occupies 111–121 (KDLEDVRQKTQ). Tandem repeats lie at residues 122–143 (PFLD…QKVE), 144–165 (PLSA…EQVT), 166–187 (PLGE…TQLA), 188–209 (PYSE…EGGS), and 210–231 (ASLA…EKAK). M193 is subject to Methionine sulfoxide. A 9; half-length repeat occupies 232–242 (PVLEDIHQGLM). Methionine sulfoxide occurs at positions 242 and 244. Repeat 10 spans residues 243-265 (PMWESFKTGVLNVIDEAAKKLTA).

The protein belongs to the apolipoprotein A1/A4/E family. In terms of assembly, homodimer. Interacts with APOA1BP and CLU. Component of a sperm activating protein complex (SPAP), consisting of APOA1, an immunoglobulin heavy chain, an immunoglobulin light chain and albumin. Interacts with NDRG1. Interacts with SCGB3A2. Interacts with NAXE and YJEFN3. In terms of processing, glycosylated. Palmitoylated. Post-translationally, phosphorylation sites are present in the extracellular medium. In terms of tissue distribution, major protein of plasma HDL, also found in chylomicrons.

The protein localises to the secreted. Functionally, participates in the reverse transport of cholesterol from tissues to the liver for excretion by promoting cholesterol efflux from tissues and by acting as a cofactor for the lecithin cholesterol acyltransferase (LCAT). As part of the SPAP complex, activates spermatozoa motility. This Tupaia belangeri (Common tree shrew) protein is Apolipoprotein A-I (APOA1).